A 21-amino-acid chain; its full sequence is Basic phospholipase A2 BjIV (21 aa).

The protein belongs to the phospholipase A2 family. Group II subfamily. As to quaternary structure, can form dimers, trimers and tetramers. The cofactor is Ca(2+). Contains seven disulfide bonds. Expressed by the venom gland.

The protein resides in the secreted. The catalysed reaction is a 1,2-diacyl-sn-glycero-3-phosphocholine + H2O = a 1-acyl-sn-glycero-3-phosphocholine + a fatty acid + H(+). Its activity is regulated as follows. Inhibited by crotapotin. Functionally, snake venom phospholipase A2 has a high enzymatic activity and produces moderate myonecrosis in skeletal muscle, but shows no neuromuscular activity in mouse phrenic nerve-diaphragm preparations. PLA2 catalyzes the calcium-dependent hydrolysis of the 2-acyl groups in 3-sn-phosphoglycerides. In Bothrops jararacussu (Jararacussu), this protein is Basic phospholipase A2 BjIV.